A 2715-amino-acid polypeptide reads, in one-letter code: Teneurin-3 (2715 aa).

Disordered stretches follow at residues 1 to 38 and 142 to 223; these read MDVK…VPTQ and GRSS…AALP. A Teneurin N-terminal domain is found at 1–309; the sequence is MDVKERRPYC…KSSKYCSWRC (309 aa). The Cytoplasmic portion of the chain corresponds to 1–310; sequence MDVKERRPYC…SSKYCSWRCT (310 aa). Over residues 142 to 153 the composition is skewed to low complexity; sequence GRSSCLSSRSNS. Positions 159–168 are enriched in basic and acidic residues; that stretch reads DTEHENRSDS. Positions 171–182 are enriched in polar residues; sequence EQPSNNPGQPTL. Over residues 201-213 the composition is skewed to low complexity; that stretch reads TSLNRNSLTNRRN. Residues 311–331 form a helical membrane-spanning segment; sequence ALCAVGVSVLLAILLSYFIAM. Topologically, residues 332–2715 are extracellular; that stretch reads HLFGLNWHLQ…FLRQSEIGKR (2384 aa). N-linked (GlcNAc...) asparagine glycosylation is found at asparagine 345, asparagine 380, and asparagine 419. EGF-like domains lie at 514–545, 546–576, 578–610, 611–642, 644–677, 678–709, 710–739, and 740–783; these read SVVE…PDCS, RAAC…TECD, PTTQ…ENCE, EADC…SNCE, LKTM…PDCS, NEIC…ACNQ, RACH…EHCT, and IAHY…AGCD. 22 disulfide bridges follow: cysteine 518–cysteine 528, cysteine 522–cysteine 533, cysteine 535–cysteine 544, cysteine 553–cysteine 564, cysteine 566–cysteine 575, cysteine 582–cysteine 593, cysteine 587–cysteine 598, cysteine 600–cysteine 609, cysteine 614–cysteine 625, cysteine 619–cysteine 630, cysteine 632–cysteine 641, cysteine 652–cysteine 665, cysteine 667–cysteine 676, cysteine 681–cysteine 691, cysteine 685–cysteine 696, cysteine 698–cysteine 707, cysteine 712–cysteine 722, cysteine 716–cysteine 727, cysteine 729–cysteine 738, cysteine 752–cysteine 762, cysteine 756–cysteine 771, and cysteine 773–cysteine 782. Asparagine 670 carries an N-linked (GlcNAc...) asparagine glycan. N-linked (GlcNAc...) asparagine glycosylation is found at asparagine 869 and asparagine 892. The NHL 1 repeat unit spans residues 1181–1209; that stretch reads LLAPVALACGIDGSLYVGDFNYVRRIFPS. Asparagine 1211 carries an N-linked (GlcNAc...) asparagine glycan. NHL repeat units lie at residues 1216-1260, 1286-1330, 1347-1387, 1418-1445, and 1474-1517; these read LELR…PKSL, ARCG…NGII, CDTS…ITEN, LESA…INRI, and CYQS…VSKN. A YD 1 repeat occupies 1527 to 1546; that stretch reads YEVASPTDQELYIFDINGTH. Asparagine 1543 and asparagine 1560 each carry an N-linked (GlcNAc...) asparagine glycan. YD repeat units follow at residues 1563–1583, 1626–1645, and 1646–1668; these read YSND…LRIR, YHGN…WTTF, and FDYD…TNLH. Residues asparagine 1656, asparagine 1693, asparagine 1751, and asparagine 1836 are each glycosylated (N-linked (GlcNAc...) asparagine). 18 YD repeats span residues 1839–1858, 1880–1898, 1899–1919, 1926–1943, 1944–1965, 1966–1983, 1986–2006, 2009–2029, 2037–2056, 2062–2079, 2080–2106, 2108–2121, 2122–2145, 2148–2168, 2169–2189, 2191–2211, 2223–2243, and 2245–2265; these read YSST…EKVD, YLEK…YIFE, YDMW…HTMQ, YYRN…IITD, YNEE…VLFK, YRRQ…TRVS, YDET…FICT, YRQI…DGMV, YDNS…TPLP, FDDI…GVIY, YDIN…IKEI, YEIF…ITIQ, YDNM…TKYA, YDVD…WRYN, YDLN…LTPL, YDLR…DEDG, YSSK…TVIY, and YDGL…LQFF. The N-linked (GlcNAc...) asparagine glycan is linked to asparagine 1937. Asparagine 2140 carries N-linked (GlcNAc...) asparagine glycosylation. Asparagine 2280 carries N-linked (GlcNAc...) asparagine glycosylation. One copy of the YD 23 repeat lies at 2291–2332; the sequence is YDLQGHLFAMEISSGDEFYIASDNTGTPLAVFSSNGLMLKQT. Asparagine 2592 carries N-linked (GlcNAc...) asparagine glycosylation.

This sequence belongs to the tenascin family. Teneurin subfamily. In terms of assembly, homodimer; disulfide-linked; to mediate homophilic cell adhesion. Most isoforms (isoform-type A and type-B) can mediate homophilic interaction. Heterodimer with either TENM1 or TENM2. May also form heterodimer with TENM4. Isoform A0B0: Does not form homodimer to mediate homophilic cell adhesion. Isoform A0B0: Heterodimer with ADGRL3. As to expression, in brain, expressed in highly specific regions of the postnatal brain: expressed in restricted domains of the developing hippocampal region, including proximal CA1, distal subiculum, and medial entorhinal cortex (at protein level). Expression matches with topographic connectivity between entorhinal cortex, CA1, and subiculum (at protein level). Also specifically expressed in subregions of the presubiculum, parasubiculum, medial mammillary nucleus and anteroventral thalamic nucleus that are topographically connected with subiculum or entorhinal cortex (at protein level). Expressed in neurons of the developing visual pathway (at protein level). Expressed in the dorsal and ventral lateral geniculate nucleus (dLGN and vLGN) and optic tract at birth. Expressed in ipsilateral retinal axons of terminal zones (TZs) in the developing superior colliculus (SC) throughout the first postnatal week. Expressed in the layer V of the visual caudal cortex. Expressed in the femoral and mandibular condylar cartilages. Strongly expressed in fibrous and proliferating chondrocytes. Poorly expressed in mature chondrocytes. Not expressed in hypertrophic chondrocytes.

Its subcellular location is the cell membrane. The protein resides in the cell projection. It localises to the axon. Its function is as follows. Involved in neural development by regulating the establishment of proper connectivity within the nervous system. Acts in both pre- and postsynaptic neurons in the hippocampus to control the assembly of a precise topographic projection: required in both CA1 and subicular neurons for the precise targeting of proximal CA1 axons to distal subiculum, probably by promoting homophilic cell adhesion. Promotes homophilic adhesion in a splicing isoform-dependent manner: most isoforms (isoform-type A and type-B) can mediate homophilic interaction. Promotes axon guidance. Required for proper dendrite morphogenesis and axon targeting in the vertebrate visual system, thereby playing a key role in the development of the visual pathway. Regulates the formation in ipsilateral retinal mapping to both the dorsal lateral geniculate nucleus (dLGN) and the superior colliculus (SC). May also be involved in the differentiation of the fibroblast-like cells in the superficial layer of mandibular condylar cartilage into chondrocytes. This chain is Teneurin-3, found in Mus musculus (Mouse).